A 145-amino-acid chain; its full sequence is Putative pre-16S rRNA nuclease (145 aa).

The protein belongs to the YqgF nuclease family.

Its subcellular location is the cytoplasm. Functionally, could be a nuclease involved in processing of the 5'-end of pre-16S rRNA. In Pseudomonas fluorescens, this protein is Putative pre-16S rRNA nuclease.